The chain runs to 129 residues: Glycine cleavage system H protein (129 aa).

The Lipoyl-binding domain occupies 24 to 106 (VFTVGISEHA…YGDGWLFKIK (83 aa)). Lysine 65 is modified (N6-lipoyllysine).

It belongs to the GcvH family. The glycine cleavage system is composed of four proteins: P, T, L and H. (R)-lipoate serves as cofactor.

In terms of biological role, the glycine cleavage system catalyzes the degradation of glycine. The H protein shuttles the methylamine group of glycine from the P protein to the T protein. The chain is Glycine cleavage system H protein from Alteromonas mediterranea (strain DSM 17117 / CIP 110805 / LMG 28347 / Deep ecotype).